We begin with the raw amino-acid sequence, 199 residues long: Chaperone protein TorD (199 aa).

This sequence belongs to the TorD/DmsD family. TorD subfamily.

Its subcellular location is the cytoplasm. In terms of biological role, involved in the biogenesis of TorA. Acts on TorA before the insertion of the molybdenum cofactor and, as a result, probably favors a conformation of the apoenzyme that is competent for acquiring the cofactor. This is Chaperone protein TorD from Escherichia coli (strain K12 / MC4100 / BW2952).